A 411-amino-acid chain; its full sequence is Adenylosuccinate synthetase (411 aa).

Residues 11–17 and 39–41 contribute to the GTP site; these read GDEGKGK and GHT. The active-site Proton acceptor is the Asp12. Residues Asp12 and Gly39 each contribute to the Mg(2+) site. IMP contacts are provided by residues 12-15, 37-40, Thr121, Arg135, Gln215, Thr230, and Arg294; these read DEGK and NAGH. The Proton donor role is filled by His40. 290–296 contacts substrate; the sequence is TTTKRPR. Residues Arg296, 322–324, and 400–402 each bind GTP; these read KLD and STS.

The protein belongs to the adenylosuccinate synthetase family. In terms of assembly, homodimer. The cofactor is Mg(2+).

The protein localises to the cytoplasm. The catalysed reaction is IMP + L-aspartate + GTP = N(6)-(1,2-dicarboxyethyl)-AMP + GDP + phosphate + 2 H(+). It participates in purine metabolism; AMP biosynthesis via de novo pathway; AMP from IMP: step 1/2. Plays an important role in the de novo pathway of purine nucleotide biosynthesis. Catalyzes the first committed step in the biosynthesis of AMP from IMP. This chain is Adenylosuccinate synthetase, found in Helicobacter pylori (strain J99 / ATCC 700824) (Campylobacter pylori J99).